The sequence spans 123 residues: Small ribosomal subunit protein uS12 (123 aa).

Residue Asp89 is modified to 3-methylthioaspartic acid.

It belongs to the universal ribosomal protein uS12 family. As to quaternary structure, part of the 30S ribosomal subunit. Contacts proteins S8 and S17. May interact with IF1 in the 30S initiation complex.

Its function is as follows. With S4 and S5 plays an important role in translational accuracy. Interacts with and stabilizes bases of the 16S rRNA that are involved in tRNA selection in the A site and with the mRNA backbone. Located at the interface of the 30S and 50S subunits, it traverses the body of the 30S subunit contacting proteins on the other side and probably holding the rRNA structure together. The combined cluster of proteins S8, S12 and S17 appears to hold together the shoulder and platform of the 30S subunit. The polypeptide is Small ribosomal subunit protein uS12 (Methylobacterium sp. (strain 4-46)).